Here is a 382-residue protein sequence, read N- to C-terminus: MTTSTVKTNLLGLTQPEMEKFFDSIGEKRFRAGQVMKWIHHFGVDDFDAMTNVSKALRDKLKAIAEVRGPEVVSEDISSDGTRKWVVRVASGSCVETVYIPQGKRGTLCVSSQAGCALDCSFCSTGKQGFNSNLTAAEVIGQVWIANKSFGSVPATVDRAITNVVMMGMGEPLLNFDNVIAAMHLMMDDLGYGISKRRVTLSTSGVVPMIDELAKHIDVSLALSLHAPNDALRNQLVPINKKYPLKMLLESCQRYMATLGEKRVLTIEYTMLKDINDKVEHAVEMIELLKNTPCKINLIPFNPFPHSGYERPSNNAIRRFQDQLHQAGYNVTVRTTRGEDIDAACGQLVGQVMDRTRRSERYIAVRELNAADDLPQIAVNRI.

Residue Glu-96 is the Proton acceptor of the active site. The 241-residue stretch at Gln-102–Asp-342 folds into the Radical SAM core domain. An intrachain disulfide couples Cys-109 to Cys-345. [4Fe-4S] cluster-binding residues include Cys-116, Cys-120, and Cys-123. S-adenosyl-L-methionine contacts are provided by residues Gly-170–Glu-171, Ser-202, Ser-224–His-226, and Asn-302. Cys-345 serves as the catalytic S-methylcysteine intermediate.

The protein belongs to the radical SAM superfamily. RlmN family. [4Fe-4S] cluster is required as a cofactor.

It is found in the cytoplasm. It catalyses the reaction adenosine(2503) in 23S rRNA + 2 reduced [2Fe-2S]-[ferredoxin] + 2 S-adenosyl-L-methionine = 2-methyladenosine(2503) in 23S rRNA + 5'-deoxyadenosine + L-methionine + 2 oxidized [2Fe-2S]-[ferredoxin] + S-adenosyl-L-homocysteine. It carries out the reaction adenosine(37) in tRNA + 2 reduced [2Fe-2S]-[ferredoxin] + 2 S-adenosyl-L-methionine = 2-methyladenosine(37) in tRNA + 5'-deoxyadenosine + L-methionine + 2 oxidized [2Fe-2S]-[ferredoxin] + S-adenosyl-L-homocysteine. Its function is as follows. Specifically methylates position 2 of adenine 2503 in 23S rRNA and position 2 of adenine 37 in tRNAs. m2A2503 modification seems to play a crucial role in the proofreading step occurring at the peptidyl transferase center and thus would serve to optimize ribosomal fidelity. The chain is Dual-specificity RNA methyltransferase RlmN from Pseudomonas fluorescens (strain SBW25).